A 241-amino-acid chain; its full sequence is Class B acid phosphatase (241 aa).

An N-terminal signal peptide occupies residues 1 to 27 (MFITTKKSLIALVLATAGLISSPVSFA). D72 functions as the Nucleophile in the catalytic mechanism. Residues D72 and D74 each contribute to the Mg(2+) site. The active-site Proton donor is the D74. Substrate contacts are provided by residues 141 to 142 (TG) and K181. Residue D196 coordinates Mg(2+).

It belongs to the class B bacterial acid phosphatase family. As to quaternary structure, homotetramer. Mg(2+) is required as a cofactor.

The protein localises to the periplasm. It catalyses the reaction a phosphate monoester + H2O = an alcohol + phosphate. Dephosphorylates several organic phosphate monoesters. Also has a phosphotransferase activity catalyzing the transfer of low-energy phosphate groups from organic phosphate monoesters to free hydroxyl groups of various organic compounds. The protein is Class B acid phosphatase of Edwardsiella ictaluri (strain 93-146).